Here is a 517-residue protein sequence, read N- to C-terminus: Transcription factor MTB3 (517 aa).

The disordered stretch occupies residues 290 to 331 (GNSSNGYRSDEGEGKLYKEELDERKPRKRGRKPANGREEALN). A compositionally biased stretch (basic and acidic residues) spans 297–314 (RSDEGEGKLYKEELDERK). The tract at residues 327–340 (EEALNHVEAERQRR) is basic motif; degenerate. Residues 327–376 (EEALNHVEAERQRREKLNQRFYALRAVVPNISKMDKASLLGDAIAYITDL) form the bHLH domain. The tract at residues 341–376 (EKLNQRFYALRAVVPNISKMDKASLLGDAIAYITDL) is helix-loop-helix motif.

The protein localises to the nucleus. Functionally, transcription factor that negatively regulates jasmonate (JA) signaling. Negatively regulates JA-dependent response to wounding, JA-induced expression of defense genes, JA-dependent responses against herbivorous insects, and JA-dependent resistance against Botrytis cinerea infection. Plays a positive role in resistance against the bacterial pathogen Pseudomonas syringae pv tomato DC3000. The sequence is that of Transcription factor MTB3 from Solanum lycopersicum (Tomato).